The primary structure comprises 274 residues: Phloretin hydrolase (274 aa).

Residues His123, Glu154, His251, and Glu255 each contribute to the Zn(2+) site.

It belongs to the DAPG/phloretin hydrolase family. Homodimer. Zn(2+) serves as cofactor.

It localises to the cytoplasm. The catalysed reaction is phloretin + H2O = phloretate + 1,3,5-trihydroxybenzene + H(+). Functionally, catalyzes the hydrolytic C-C cleavage of phloretin to phloroglucinol and 3-(4-hydroxyphenyl)propionic acid during flavonoid degradation. Also hydrolyzes other C-acylated phenols. This is Phloretin hydrolase (phy) from Eubacterium ramulus.